The following is a 54-amino-acid chain: uncharacterized protein (54 aa).

The tract at residues 34–54 (NNREKQKSGKLRELRRGFKTF) is disordered.

This is an uncharacterized protein from Acidianus two-tailed virus (ATV).